The primary structure comprises 394 residues: GDSL esterase/lipase At2g27360 (394 aa).

The signal sequence occupies residues Met1 to Ser24. The Nucleophile role is filled by Ser40. 2 N-linked (GlcNAc...) asparagine glycosylation sites follow: Asn136 and Asn319. Residues Asp344 and His347 contribute to the active site. Residues Asn371 and Asn382 are each glycosylated (N-linked (GlcNAc...) asparagine).

Belongs to the 'GDSL' lipolytic enzyme family.

It is found in the secreted. The polypeptide is GDSL esterase/lipase At2g27360 (Arabidopsis thaliana (Mouse-ear cress)).